The chain runs to 122 residues: Large ribosomal subunit protein uL14 (122 aa).

It belongs to the universal ribosomal protein uL14 family. In terms of assembly, part of the 50S ribosomal subunit. Forms a cluster with proteins L3 and L19. In the 70S ribosome, L14 and L19 interact and together make contacts with the 16S rRNA in bridges B5 and B8.

Binds to 23S rRNA. Forms part of two intersubunit bridges in the 70S ribosome. The protein is Large ribosomal subunit protein uL14 of Dehalococcoides mccartyi (strain ATCC BAA-2266 / KCTC 15142 / 195) (Dehalococcoides ethenogenes (strain 195)).